An 87-amino-acid polypeptide reads, in one-letter code: DNA-directed RNA polymerase subunit omega (87 aa).

The protein belongs to the RNA polymerase subunit omega family. The RNAP catalytic core consists of 2 alpha, 1 beta, 1 beta' and 1 omega subunit. When a sigma factor is associated with the core the holoenzyme is formed, which can initiate transcription.

It catalyses the reaction RNA(n) + a ribonucleoside 5'-triphosphate = RNA(n+1) + diphosphate. Functionally, promotes RNA polymerase assembly. Latches the N- and C-terminal regions of the beta' subunit thereby facilitating its interaction with the beta and alpha subunits. This is DNA-directed RNA polymerase subunit omega from Pseudomonas syringae pv. syringae (strain B728a).